A 379-amino-acid chain; its full sequence is tRNA-specific 2-thiouridylase MnmA (379 aa).

Residues 9–16 (GLSGGVDS) and methionine 35 each bind ATP. Residues 95 to 97 (NPD) form an interaction with target base in tRNA region. Cysteine 100 (nucleophile) is an active-site residue. An intrachain disulfide couples cysteine 100 to cysteine 198. Glycine 124 lines the ATP pocket. The tract at residues 148–150 (KDQ) is interaction with tRNA. Cysteine 198 acts as the Cysteine persulfide intermediate in catalysis. The interaction with tRNA stretch occupies residues 325–326 (RY).

The protein belongs to the MnmA/TRMU family.

Its subcellular location is the cytoplasm. The catalysed reaction is S-sulfanyl-L-cysteinyl-[protein] + uridine(34) in tRNA + AH2 + ATP = 2-thiouridine(34) in tRNA + L-cysteinyl-[protein] + A + AMP + diphosphate + H(+). Its function is as follows. Catalyzes the 2-thiolation of uridine at the wobble position (U34) of tRNA, leading to the formation of s(2)U34. This chain is tRNA-specific 2-thiouridylase MnmA, found in Acidovorax sp. (strain JS42).